Here is a 421-residue protein sequence, read N- to C-terminus: Glutamate-1-semialdehyde 2,1-aminomutase (421 aa).

K261 carries the N6-(pyridoxal phosphate)lysine modification.

This sequence belongs to the class-III pyridoxal-phosphate-dependent aminotransferase family. HemL subfamily. It depends on pyridoxal 5'-phosphate as a cofactor.

The protein resides in the cytoplasm. The enzyme catalyses (S)-4-amino-5-oxopentanoate = 5-aminolevulinate. It participates in porphyrin-containing compound metabolism; protoporphyrin-IX biosynthesis; 5-aminolevulinate from L-glutamyl-tRNA(Glu): step 2/2. This is Glutamate-1-semialdehyde 2,1-aminomutase (hemL) from Thermoplasma acidophilum (strain ATCC 25905 / DSM 1728 / JCM 9062 / NBRC 15155 / AMRC-C165).